The primary structure comprises 310 residues: L-lactate dehydrogenase (310 aa).

Residues V11, D32, Y62, and 76–77 (GV) contribute to the NAD(+) site. Substrate contacts are provided by residues Q79, R85, and 117 to 120 (NPVD). Residues 115–117 (ATN) and S140 contribute to the NAD(+) site. Substrate is bound at residue 145–148 (DTAR). The beta-D-fructose 1,6-bisphosphate site is built by R150 and H165. Residue H172 is the Proton acceptor of the active site. Y218 is modified (phosphotyrosine). Substrate is bound at residue T227.

Belongs to the LDH/MDH superfamily. LDH family. As to quaternary structure, homotetramer.

Its subcellular location is the cytoplasm. It carries out the reaction (S)-lactate + NAD(+) = pyruvate + NADH + H(+). It functions in the pathway fermentation; pyruvate fermentation to lactate; (S)-lactate from pyruvate: step 1/1. Its activity is regulated as follows. Allosterically activated by fructose 1,6-bisphosphate (FBP). Its function is as follows. Catalyzes the conversion of lactate to pyruvate. This is L-lactate dehydrogenase from Thermus thermophilus (strain ATCC BAA-163 / DSM 7039 / HB27).